We begin with the raw amino-acid sequence, 315 residues long: Tetratricopeptide repeat protein 23-like (315 aa).

The segment at 28 to 56 (KIPEHQRTDESSPTSGSEESEEDTKAKEK) is disordered. Coiled-coil stretches lie at residues 65–90 (REKL…ANKE), 179–200 (REAY…ESYK), and 250–280 (SELV…HQAH).

Its subcellular location is the cytoplasm. It localises to the cytoskeleton. The protein localises to the microtubule organizing center. The protein resides in the centrosome. It is found in the spindle. Its subcellular location is the midbody. In Bos taurus (Bovine), this protein is Tetratricopeptide repeat protein 23-like (TTC23L).